Reading from the N-terminus, the 487-residue chain is Glutamyl-tRNA(Gln) amidotransferase subunit A (487 aa).

Active-site charge relay system residues include K76 and S151. Catalysis depends on S175, which acts as the Acyl-ester intermediate.

This sequence belongs to the amidase family. GatA subfamily. As to quaternary structure, heterotrimer of A, B and C subunits.

The catalysed reaction is L-glutamyl-tRNA(Gln) + L-glutamine + ATP + H2O = L-glutaminyl-tRNA(Gln) + L-glutamate + ADP + phosphate + H(+). Its function is as follows. Allows the formation of correctly charged Gln-tRNA(Gln) through the transamidation of misacylated Glu-tRNA(Gln) in organisms which lack glutaminyl-tRNA synthetase. The reaction takes place in the presence of glutamine and ATP through an activated gamma-phospho-Glu-tRNA(Gln). The polypeptide is Glutamyl-tRNA(Gln) amidotransferase subunit A (Azoarcus sp. (strain BH72)).